A 90-amino-acid chain; its full sequence is Putative sodium channel toxin Ts28 (90 aa).

Positions 1–23 (MKISLVTWLITALCLMEIEEIDG) are cleaved as a signal peptide. Positions 26 to 86 (PGNYPVDFQG…FWDVMKKQCD (61 aa)) constitute an LCN-type CS-alpha/beta domain. Intrachain disulfides connect C40–C60, C46–C65, and C50–C67.

This sequence belongs to the long (3 C-C) scorpion toxin superfamily. In terms of assembly, monomer (edited version) and heterodimer (non-edited version) of this alpha chain and a beta chain (AC P0CI43). In terms of tissue distribution, expressed by the venom gland.

The protein resides in the secreted. Its function is as follows. The edited BmKBTx-like may modulate voltage-gated sodium channels (Nav). In terms of biological role, the non-edited form is able to form a heterodimer. In orthologs, a heterodimer with LVP beta-chain induces lipolysis in rat adipocytes, which is mediated through the beta-2 adrenergic receptor pathway (ADRB2). Since no LVP beta-chains have been identified in the venom of this scorpion, it is possible that this protein is not involved in a lipolysis process. The protein is Putative sodium channel toxin Ts28 of Tityus serrulatus (Brazilian scorpion).